A 939-amino-acid polypeptide reads, in one-letter code: Protein translocase subunit SecA 1 (939 aa).

ATP contacts are provided by residues glutamine 85, 103–107, and aspartate 504; that span reads GEGKT. Residues 848-939 are disordered; it reads EVPVEDEKPS…QSKGGRRRKK (92 aa). Composition is skewed to basic and acidic residues over residues 852-863, 872-889, and 914-925; these read EDEKPSLEKEDA, PEIR…DRLH, and PVRSEADGLTRA. Over residues 926–939 the composition is skewed to basic residues; it reads ERRKQSKGGRRRKK.

It belongs to the SecA family. In terms of assembly, monomer and homodimer. Part of the essential Sec protein translocation apparatus which comprises SecA, SecYEG and auxiliary proteins SecDF. Other proteins may also be involved.

The protein localises to the cell membrane. It is found in the cytoplasm. The enzyme catalyses ATP + H2O + cellular proteinSide 1 = ADP + phosphate + cellular proteinSide 2.. In terms of biological role, part of the Sec protein translocase complex. Interacts with the SecYEG preprotein conducting channel. Has a central role in coupling the hydrolysis of ATP to the transfer of proteins into and across the cell membrane, serving as an ATP-driven molecular motor driving the stepwise translocation of polypeptide chains across the membrane. The chain is Protein translocase subunit SecA 1 from Streptomyces avermitilis (strain ATCC 31267 / DSM 46492 / JCM 5070 / NBRC 14893 / NCIMB 12804 / NRRL 8165 / MA-4680).